The chain runs to 132 residues: Histone H2A (132 aa).

A compositionally biased stretch (basic residues) spans 1 to 13 (MSAKGKTGRKKAS). The tract at residues 1-21 (MSAKGKTGRKKASKGTSNSAK) is disordered.

The protein belongs to the histone H2A family. In terms of assembly, the nucleosome is a histone octamer containing two molecules each of H2A, H2B, H3 and H4 assembled in one H3-H4 heterotetramer and two H2A-H2B heterodimers. The octamer wraps approximately 147 bp of DNA.

The protein localises to the nucleus. It localises to the chromosome. Functionally, core component of nucleosome. Nucleosomes wrap and compact DNA into chromatin, limiting DNA accessibility to the cellular machineries which require DNA as a template. Histones thereby play a central role in transcription regulation, DNA repair, DNA replication and chromosomal stability. DNA accessibility is regulated via a complex set of post-translational modifications of histones, also called histone code, and nucleosome remodeling. In Plasmodium falciparum, this protein is Histone H2A.